Consider the following 192-residue polypeptide: MSEQTQQQNSEEAVENVEAVETVETVGNADGVQEQAAAEPAYEDLQARIAELEAQLKDEQLRALANEQNLRRRHQQEIADTHKFAGQKFAVEMLPVKDYLEMALLDQSGNFDALKMGVQMTLNELQKAFDATQIKEINPKAGDKLDPNIHQAMQAVASEQEPNTVVGVMKKGYTLSDRVLRPAMVTVAQKEA.

Belongs to the GrpE family. As to quaternary structure, homodimer.

The protein resides in the cytoplasm. Its function is as follows. Participates actively in the response to hyperosmotic and heat shock by preventing the aggregation of stress-denatured proteins, in association with DnaK and GrpE. It is the nucleotide exchange factor for DnaK and may function as a thermosensor. Unfolded proteins bind initially to DnaJ; upon interaction with the DnaJ-bound protein, DnaK hydrolyzes its bound ATP, resulting in the formation of a stable complex. GrpE releases ADP from DnaK; ATP binding to DnaK triggers the release of the substrate protein, thus completing the reaction cycle. Several rounds of ATP-dependent interactions between DnaJ, DnaK and GrpE are required for fully efficient folding. The polypeptide is Protein GrpE (Neisseria gonorrhoeae (strain NCCP11945)).